We begin with the raw amino-acid sequence, 248 residues long: 14-3-3-like protein G-BOX factor 14 lambda (248 aa).

Residues Ser70, Ser112, and Ser193 each carry the phosphoserine; by CRPK1 modification. Thr214 bears the Phosphothreonine; by CRPK1 mark.

The protein belongs to the 14-3-3 family. As to quaternary structure, interacts with SERK1 in the cell membrane. Component of the SERK1 signaling complex, composed of KAPP, CDC48A, GRF6 or GRF7, SERK1, SERK2, SERK3/BAK1 and BRI1. Interacts with TPK1. Interacts with ADF1. Binds to CRPK1 at the plasma membrane. Interacts with DREB1A and DREB1B in the nucleus when activated by CRPK1-mediated phosphorylation upon freezing. Interacts with CINV1. Binds to the N-terminal region of B1L. Post-translationally, transphosphorylated by SERK1. In terms of processing, phosphorylated by CRPK1 in response to cold.

It localises to the nucleus. The protein resides in the cell membrane. Its subcellular location is the cytoplasm. In terms of biological role, is associated with a DNA binding complex that binds to the G box, a well-characterized cis-acting DNA regulatory element found in plant genes. Specific negative regulator of slow-vacuolar (SV) ion channel. Mediates F-actin dynamics possibly through inhibiting ADF1 phosphorylation. Negative regulator of freezing tolerance that modulates cold-responsive C-repeat-binding factors (CBF) DREB1A and DREB1B proteins stability by facilitating their ubiquitin-mediated degradation when activated by CRPK1-mediated phosphorylation in freezing conditions; this processus is counteracted by B1L. The chain is 14-3-3-like protein G-BOX factor 14 lambda from Arabidopsis thaliana (Mouse-ear cress).